Here is a 283-residue protein sequence, read N- to C-terminus: Acetyl-coenzyme A carboxylase carboxyl transferase subunit beta (283 aa).

Residues 23-283 enclose the CoA carboxyltransferase N-terminal domain; the sequence is LWIKCPSCSE…DFLMAGKAAA (261 aa). C27, C30, C46, and C49 together coordinate Zn(2+). A C4-type zinc finger spans residues 27-49; the sequence is CPSCSEMLFTKEYEDNLSVCPHC.

Belongs to the AccD/PCCB family. As to quaternary structure, acetyl-CoA carboxylase is a heterohexamer composed of biotin carboxyl carrier protein (AccB), biotin carboxylase (AccC) and two subunits each of ACCase subunit alpha (AccA) and ACCase subunit beta (AccD). It depends on Zn(2+) as a cofactor.

The protein localises to the cytoplasm. The catalysed reaction is N(6)-carboxybiotinyl-L-lysyl-[protein] + acetyl-CoA = N(6)-biotinyl-L-lysyl-[protein] + malonyl-CoA. It participates in lipid metabolism; malonyl-CoA biosynthesis; malonyl-CoA from acetyl-CoA: step 1/1. In terms of biological role, component of the acetyl coenzyme A carboxylase (ACC) complex. Biotin carboxylase (BC) catalyzes the carboxylation of biotin on its carrier protein (BCCP) and then the CO(2) group is transferred by the transcarboxylase to acetyl-CoA to form malonyl-CoA. In Novosphingobium aromaticivorans (strain ATCC 700278 / DSM 12444 / CCUG 56034 / CIP 105152 / NBRC 16084 / F199), this protein is Acetyl-coenzyme A carboxylase carboxyl transferase subunit beta.